A 117-amino-acid polypeptide reads, in one-letter code: Large ribosomal subunit protein bL19 (117 aa).

This sequence belongs to the bacterial ribosomal protein bL19 family.

Its function is as follows. This protein is located at the 30S-50S ribosomal subunit interface and may play a role in the structure and function of the aminoacyl-tRNA binding site. The sequence is that of Large ribosomal subunit protein bL19 from Halorhodospira halophila (strain DSM 244 / SL1) (Ectothiorhodospira halophila (strain DSM 244 / SL1)).